The chain runs to 422 residues: Histidine--tRNA ligase (422 aa).

It belongs to the class-II aminoacyl-tRNA synthetase family. As to quaternary structure, homodimer.

It localises to the cytoplasm. The catalysed reaction is tRNA(His) + L-histidine + ATP = L-histidyl-tRNA(His) + AMP + diphosphate + H(+). The sequence is that of Histidine--tRNA ligase from Vibrio atlanticus (strain LGP32) (Vibrio splendidus (strain Mel32)).